The sequence spans 78 residues: Small ribosomal subunit protein bS18 (78 aa).

This sequence belongs to the bacterial ribosomal protein bS18 family. As to quaternary structure, part of the 30S ribosomal subunit. Forms a tight heterodimer with protein bS6.

Functionally, binds as a heterodimer with protein bS6 to the central domain of the 16S rRNA, where it helps stabilize the platform of the 30S subunit. The polypeptide is Small ribosomal subunit protein bS18 (Beutenbergia cavernae (strain ATCC BAA-8 / DSM 12333 / CCUG 43141 / JCM 11478 / NBRC 16432 / NCIMB 13614 / HKI 0122)).